Here is a 243-residue protein sequence, read N- to C-terminus: Segregation and condensation protein A (243 aa).

It belongs to the ScpA family. As to quaternary structure, component of a cohesin-like complex composed of ScpA, ScpB and the Smc homodimer, in which ScpA and ScpB bind to the head domain of Smc. The presence of the three proteins is required for the association of the complex with DNA.

It is found in the cytoplasm. Participates in chromosomal partition during cell division. May act via the formation of a condensin-like complex containing Smc and ScpB that pull DNA away from mid-cell into both cell halves. In Staphylococcus haemolyticus (strain JCSC1435), this protein is Segregation and condensation protein A.